The chain runs to 203 residues: A-type ATP synthase subunit E (203 aa).

Belongs to the V-ATPase E subunit family. As to quaternary structure, has multiple subunits with at least A(3), B(3), C, D, E, F, H, I and proteolipid K(x).

It localises to the cell membrane. In terms of biological role, component of the A-type ATP synthase that produces ATP from ADP in the presence of a proton gradient across the membrane. The polypeptide is A-type ATP synthase subunit E (Methanococcus aeolicus (strain ATCC BAA-1280 / DSM 17508 / OCM 812 / Nankai-3)).